The primary structure comprises 118 residues: Small ribosomal subunit protein uS13 (118 aa).

A disordered region spans residues 94-118 (SLPLRGQRTKTNARTRKGPRKPIKK).

Belongs to the universal ribosomal protein uS13 family. Part of the 30S ribosomal subunit. Forms a loose heterodimer with protein S19. Forms two bridges to the 50S subunit in the 70S ribosome.

In terms of biological role, located at the top of the head of the 30S subunit, it contacts several helices of the 16S rRNA. In the 70S ribosome it contacts the 23S rRNA (bridge B1a) and protein L5 of the 50S subunit (bridge B1b), connecting the 2 subunits; these bridges are implicated in subunit movement. Contacts the tRNAs in the A and P-sites. This Shewanella amazonensis (strain ATCC BAA-1098 / SB2B) protein is Small ribosomal subunit protein uS13.